A 660-amino-acid polypeptide reads, in one-letter code: tRNA 5-methylaminomethyl-2-thiouridine biosynthesis bifunctional protein MnmC (660 aa).

The tRNA (mnm(5)s(2)U34)-methyltransferase stretch occupies residues 1-233; that stretch reads MTHSHAQLVW…KRHISHGWIA (233 aa). The interval 260-660 is FAD-dependent cmnm(5)s(2)U34 oxidoreductase; that stretch reads VGGGLAGAAS…IRRKLDPDAL (401 aa).

The protein in the N-terminal section; belongs to the methyltransferase superfamily. tRNA (mnm(5)s(2)U34)-methyltransferase family. This sequence in the C-terminal section; belongs to the DAO family. It depends on FAD as a cofactor.

Its subcellular location is the cytoplasm. It carries out the reaction 5-aminomethyl-2-thiouridine(34) in tRNA + S-adenosyl-L-methionine = 5-methylaminomethyl-2-thiouridine(34) in tRNA + S-adenosyl-L-homocysteine + H(+). Catalyzes the last two steps in the biosynthesis of 5-methylaminomethyl-2-thiouridine (mnm(5)s(2)U) at the wobble position (U34) in tRNA. Catalyzes the FAD-dependent demodification of cmnm(5)s(2)U34 to nm(5)s(2)U34, followed by the transfer of a methyl group from S-adenosyl-L-methionine to nm(5)s(2)U34, to form mnm(5)s(2)U34. This is tRNA 5-methylaminomethyl-2-thiouridine biosynthesis bifunctional protein MnmC from Chromobacterium violaceum (strain ATCC 12472 / DSM 30191 / JCM 1249 / CCUG 213 / NBRC 12614 / NCIMB 9131 / NCTC 9757 / MK).